Consider the following 178-residue polypeptide: Zinc finger protein ZAT11 (178 aa).

2 C2H2-type zinc fingers span residues 47–69 and 94–116; these read FECKTCNKRFSSFQALGGHRASH and HKCSICSQSFGTGQALGGHMRRH.

In terms of tissue distribution, expressed in leaves.

It localises to the nucleus. Functionally, probable transcription factor that may be involved in stress responses. In Arabidopsis thaliana (Mouse-ear cress), this protein is Zinc finger protein ZAT11 (ZAT11).